A 140-amino-acid polypeptide reads, in one-letter code: 3-hydroxyacyl-[acyl-carrier-protein] dehydratase FabZ (140 aa).

The active site involves His48.

It belongs to the thioester dehydratase family. FabZ subfamily.

It localises to the cytoplasm. The catalysed reaction is a (3R)-hydroxyacyl-[ACP] = a (2E)-enoyl-[ACP] + H2O. Involved in unsaturated fatty acids biosynthesis. Catalyzes the dehydration of short chain beta-hydroxyacyl-ACPs and long chain saturated and unsaturated beta-hydroxyacyl-ACPs. This chain is 3-hydroxyacyl-[acyl-carrier-protein] dehydratase FabZ, found in Pelotomaculum thermopropionicum (strain DSM 13744 / JCM 10971 / SI).